Reading from the N-terminus, the 322-residue chain is Tropinone reductase homolog At2g29260, chloroplastic (322 aa).

The N-terminal 61 residues, 1 to 61 (MVLDMASHLY…YASQSSIAIT (61 aa)), are a transit peptide targeting the chloroplast. 74–98 (LVTGGTRGIGRAIVEELAGLGAEVH) serves as a coordination point for NADP(+). Serine 207 lines the substrate pocket.

The protein belongs to the short-chain dehydrogenases/reductases (SDR) family. SDR65C subfamily.

Its subcellular location is the plastid. The protein resides in the chloroplast. In Arabidopsis thaliana (Mouse-ear cress), this protein is Tropinone reductase homolog At2g29260, chloroplastic.